The following is a 512-amino-acid chain: Glutathione-binding protein GsiB (512 aa).

The N-terminal stretch at Met1–Ala26 is a signal peptide.

It belongs to the bacterial solute-binding protein 5 family. As to quaternary structure, the complex is composed of two ATP-binding proteins (GsiA), two transmembrane proteins (GsiC and GsiD) and a solute-binding protein (GsiB). In the presence of glutathione, interacts with the transmembrane proteins GsiC and GsiD.

It is found in the periplasm. Part of the ABC transporter complex GsiABCD involved in glutathione import. Binds glutathione. The chain is Glutathione-binding protein GsiB from Escherichia coli (strain K12).